The sequence spans 322 residues: HPr kinase/phosphorylase (322 aa).

Active-site residues include histidine 153 and lysine 174. 168–175 contributes to the ATP binding site; that stretch reads GRSGLGKS. Residue serine 175 participates in Mg(2+) binding. The active-site Proton acceptor; for phosphorylation activity. Proton donor; for dephosphorylation activity is the aspartate 192. An important for the catalytic mechanism of both phosphorylation and dephosphorylation region spans residues 217–226; sequence MEIRGLGVVD. A Mg(2+)-binding site is contributed by glutamate 218. Arginine 259 is a catalytic residue. The tract at residues 280–285 is important for the catalytic mechanism of dephosphorylation; sequence PIFPGK.

Belongs to the HPrK/P family. As to quaternary structure, homohexamer. It depends on Mg(2+) as a cofactor.

It carries out the reaction [HPr protein]-L-serine + ATP = [HPr protein]-O-phospho-L-serine + ADP + H(+). The catalysed reaction is [HPr protein]-O-phospho-L-serine + phosphate + H(+) = [HPr protein]-L-serine + diphosphate. Functionally, catalyzes the ATP- as well as the pyrophosphate-dependent phosphorylation of a specific serine residue in HPr, a phosphocarrier protein of the phosphoenolpyruvate-dependent sugar phosphotransferase system (PTS). HprK/P also catalyzes the pyrophosphate-producing, inorganic phosphate-dependent dephosphorylation (phosphorolysis) of seryl-phosphorylated HPr (P-Ser-HPr). The protein is HPr kinase/phosphorylase of Chlorobium phaeobacteroides (strain DSM 266 / SMG 266 / 2430).